Here is a 461-residue protein sequence, read N- to C-terminus: L-seryl-tRNA(Sec) selenium transferase (461 aa).

Residue Lys291 is modified to N6-(pyridoxal phosphate)lysine.

This sequence belongs to the SelA family. Pyridoxal 5'-phosphate serves as cofactor.

It is found in the cytoplasm. The catalysed reaction is L-seryl-tRNA(Sec) + selenophosphate + H(+) = L-selenocysteinyl-tRNA(Sec) + phosphate. The protein operates within aminoacyl-tRNA biosynthesis; selenocysteinyl-tRNA(Sec) biosynthesis; selenocysteinyl-tRNA(Sec) from L-seryl-tRNA(Sec) (bacterial route): step 1/1. Its function is as follows. Converts seryl-tRNA(Sec) to selenocysteinyl-tRNA(Sec) required for selenoprotein biosynthesis. This Caldanaerobacter subterraneus subsp. tengcongensis (strain DSM 15242 / JCM 11007 / NBRC 100824 / MB4) (Thermoanaerobacter tengcongensis) protein is L-seryl-tRNA(Sec) selenium transferase.